We begin with the raw amino-acid sequence, 341 residues long: Phosphoribosylformylglycinamidine cyclo-ligase (341 aa).

It belongs to the AIR synthase family.

It localises to the cytoplasm. The enzyme catalyses 2-formamido-N(1)-(5-O-phospho-beta-D-ribosyl)acetamidine + ATP = 5-amino-1-(5-phospho-beta-D-ribosyl)imidazole + ADP + phosphate + H(+). The protein operates within purine metabolism; IMP biosynthesis via de novo pathway; 5-amino-1-(5-phospho-D-ribosyl)imidazole from N(2)-formyl-N(1)-(5-phospho-D-ribosyl)glycinamide: step 2/2. The chain is Phosphoribosylformylglycinamidine cyclo-ligase from Xanthomonas campestris pv. campestris (strain 8004).